Reading from the N-terminus, the 676-residue chain is Ion-translocating oxidoreductase complex subunit C (676 aa).

4Fe-4S ferredoxin-type domains are found at residues 369-397 (GEPQ…QQLY) and 407-436 (KATT…VQYF). [4Fe-4S] cluster contacts are provided by C377, C380, C383, C387, C416, C419, C422, and C426. Residues 600–652 (ARKLEQQQANAEPEQQVDPRKAAVEAAIARAKARKLEQQQANAEPEEQVDPRK) form a disordered region. Positions 605–615 (QQQANAEPEQQ) are enriched in low complexity.

This sequence belongs to the 4Fe4S bacterial-type ferredoxin family. RnfC subfamily. In terms of assembly, the complex is composed of six subunits: RsxA, RsxB, RsxC, RsxD, RsxE and RsxG. Requires [4Fe-4S] cluster as cofactor.

The protein localises to the cell inner membrane. In terms of biological role, part of a membrane-bound complex that couples electron transfer with translocation of ions across the membrane. Required to maintain the reduced state of SoxR. The sequence is that of Ion-translocating oxidoreductase complex subunit C from Escherichia coli (strain SMS-3-5 / SECEC).